The following is a 490-amino-acid chain: Glutamate--tRNA ligase (490 aa).

Residues 12–22 carry the 'HIGH' region motif; the sequence is PSPTGTPHVGL. A 'KMSKS' region motif is present at residues 256 to 260; that stretch reads KLSKR. Lys-259 is a binding site for ATP.

Belongs to the class-I aminoacyl-tRNA synthetase family. Glutamate--tRNA ligase type 1 subfamily. Monomer.

The protein localises to the cytoplasm. It carries out the reaction tRNA(Glu) + L-glutamate + ATP = L-glutamyl-tRNA(Glu) + AMP + diphosphate. Catalyzes the attachment of glutamate to tRNA(Glu) in a two-step reaction: glutamate is first activated by ATP to form Glu-AMP and then transferred to the acceptor end of tRNA(Glu). The sequence is that of Glutamate--tRNA ligase from Mycobacterium sp. (strain JLS).